The primary structure comprises 99 residues: Integration host factor subunit alpha (99 aa).

Residues 49-71 (FGNFDLRDKNQRPGRNPKTGEDI) are disordered.

This sequence belongs to the bacterial histone-like protein family. In terms of assembly, heterodimer of an alpha and a beta chain.

In terms of biological role, this protein is one of the two subunits of integration host factor, a specific DNA-binding protein that functions in genetic recombination as well as in transcriptional and translational control. In Shewanella frigidimarina (strain NCIMB 400), this protein is Integration host factor subunit alpha.